The following is a 162-amino-acid chain: Inner membrane protein YbjO (162 aa).

The Periplasmic segment spans residues 1-23 (MEDETLGFFKKTSSSHARLNVPA). Residues 24 to 44 (LVQVAALAIIMIRGLDVLMIF) form a helical membrane-spanning segment. Topologically, residues 45-66 (NTLGVRGIGEFIHRSVQTWSLT) are cytoplasmic. The chain crosses the membrane as a helical span at residues 67-87 (LVFLSSLVLVFIEIWCAFSLV). Topologically, residues 88–94 (KGRRWAR) are periplasmic. The helical transmembrane segment at 95–115 (WLYLLTQITAASYLWAASLGY) threads the bilayer. Over 116–162 (GYPELFSIPGESKREIFHSLMLQKLPDMLILMLLFVPSTSRRFFQLQ) the chain is Cytoplasmic.

The protein localises to the cell inner membrane. The protein is Inner membrane protein YbjO (ybjO) of Escherichia coli O157:H7.